A 270-amino-acid chain; its full sequence is Cyclase-like protein 3 (270 aa).

Residues 1–23 (MMAHLAPLFLLLLLLLLPLHAAA) form the signal peptide.

This sequence belongs to the Cyclase 1 superfamily. In terms of tissue distribution, highly expressed in leaf sheaths. leaf collars and flag leaves. Expressed in roots, stems, glumes, young panicles and pistils.

The protein localises to the secreted. It is found in the extracellular space. Its subcellular location is the extracellular matrix. May be involved in response to stresses. This Oryza sativa subsp. japonica (Rice) protein is Cyclase-like protein 3.